The sequence spans 411 residues: Multifunctional CCA protein (411 aa).

Residues Gly8 and Arg11 each contribute to the ATP site. Residues Gly8 and Arg11 each coordinate CTP. Mg(2+) is bound by residues Asp21 and Asp23. Positions 91, 143, and 146 each coordinate ATP. The CTP site is built by Arg91, Arg143, and Arg146. Positions 232 to 333 constitute an HD domain; it reads TGVHVMMVID…MRLLERCDAL (102 aa).

This sequence belongs to the tRNA nucleotidyltransferase/poly(A) polymerase family. Bacterial CCA-adding enzyme type 1 subfamily. As to quaternary structure, monomer. Can also form homodimers and oligomers. The cofactor is Mg(2+). It depends on Ni(2+) as a cofactor.

The enzyme catalyses a tRNA precursor + 2 CTP + ATP = a tRNA with a 3' CCA end + 3 diphosphate. It catalyses the reaction a tRNA with a 3' CCA end + 2 CTP + ATP = a tRNA with a 3' CCACCA end + 3 diphosphate. Catalyzes the addition and repair of the essential 3'-terminal CCA sequence in tRNAs without using a nucleic acid template. Adds these three nucleotides in the order of C, C, and A to the tRNA nucleotide-73, using CTP and ATP as substrates and producing inorganic pyrophosphate. tRNA 3'-terminal CCA addition is required both for tRNA processing and repair. Also involved in tRNA surveillance by mediating tandem CCA addition to generate a CCACCA at the 3' terminus of unstable tRNAs. While stable tRNAs receive only 3'-terminal CCA, unstable tRNAs are marked with CCACCA and rapidly degraded. The polypeptide is Multifunctional CCA protein (Cupriavidus necator (strain ATCC 17699 / DSM 428 / KCTC 22496 / NCIMB 10442 / H16 / Stanier 337) (Ralstonia eutropha)).